Here is a 484-residue protein sequence, read N- to C-terminus: Probable D-lactate dehydrogenase, mitochondrial (484 aa).

The N-terminal 52 residues, 1–52, are a transit peptide targeting the mitochondrion; sequence MAMLLRVATQRLSPWRSFCSRGSQGGLSQDFVEALKAVVGSPHVSTASAVRE. K36 bears the N6-acetyllysine mark. The FAD-binding PCMH-type domain maps to 62–242; that stretch reads RCQPPDAVVW…TSTTLRLHPA (181 aa). K292 carries the N6-acetyllysine modification. K335 is modified (N6-acetyllysine; alternate). Residue K335 is modified to N6-succinyllysine; alternate. 2 positions are modified to N6-acetyllysine: K422 and K449.

It belongs to the FAD-binding oxidoreductase/transferase type 4 family. As to quaternary structure, interacts with CSRP3. FAD is required as a cofactor. In terms of tissue distribution, readily detected in liver and kidney, with a weaker signal observed in heart, skeletal muscle, stomach, brain, and lung.

The protein resides in the mitochondrion. It carries out the reaction (R)-lactate + 2 Fe(III)-[cytochrome c] = 2 Fe(II)-[cytochrome c] + pyruvate + 2 H(+). Functionally, involved in D-lactate, but not L-lactate catabolic process. This Mus musculus (Mouse) protein is Probable D-lactate dehydrogenase, mitochondrial.